The following is a 399-amino-acid chain: Tyrosine--tRNA ligase (399 aa).

Positions 42 to 51 (PTAPDLHLGH) match the 'HIGH' region motif. A 'KMSKS' region motif is present at residues 226–230 (KMSKS). Lys-229 provides a ligand contact to ATP. Residues 337–398 (IAIANLLKDA…GKRKFARITV (62 aa)) form the S4 RNA-binding domain.

The protein belongs to the class-I aminoacyl-tRNA synthetase family. TyrS type 2 subfamily. In terms of assembly, homodimer.

It localises to the cytoplasm. It carries out the reaction tRNA(Tyr) + L-tyrosine + ATP = L-tyrosyl-tRNA(Tyr) + AMP + diphosphate + H(+). Catalyzes the attachment of tyrosine to tRNA(Tyr) in a two-step reaction: tyrosine is first activated by ATP to form Tyr-AMP and then transferred to the acceptor end of tRNA(Tyr). The protein is Tyrosine--tRNA ligase of Colwellia psychrerythraea (strain 34H / ATCC BAA-681) (Vibrio psychroerythus).